We begin with the raw amino-acid sequence, 107 residues long: Sulmotoxin 1 (107 aa).

The signal sequence occupies residues 1–19; it reads MKTLLLALAVVVLVCLGSA. Positions 20–34 are excised as a propeptide; it reads NELGLGRQRVDRRRR. 5 disulfides stabilise this stretch: Cys-44/Cys-68, Cys-47/Cys-55, Cys-61/Cys-83, Cys-87/Cys-98, and Cys-99/Cys-104.

The protein belongs to the three-finger toxin family. Ancestral subfamily. Boigatoxin sub-subfamily. Monomer. Expressed by the venom gland.

Its subcellular location is the secreted. Mammal-specific neurotoxin (tested on mice). Not toxic to lizards (tested on geckos). The polypeptide is Sulmotoxin 1 (Spilotes sulphureus (Amazon puffing snake)).